The sequence spans 362 residues: UDP-3-O-acylglucosamine N-acyltransferase 1 (362 aa).

Catalysis depends on His258, which acts as the Proton acceptor.

This sequence belongs to the transferase hexapeptide repeat family. LpxD subfamily. In terms of assembly, homotrimer.

It carries out the reaction a UDP-3-O-[(3R)-3-hydroxyacyl]-alpha-D-glucosamine + a (3R)-hydroxyacyl-[ACP] = a UDP-2-N,3-O-bis[(3R)-3-hydroxyacyl]-alpha-D-glucosamine + holo-[ACP] + H(+). It participates in bacterial outer membrane biogenesis; LPS lipid A biosynthesis. Its function is as follows. Catalyzes the N-acylation of UDP-3-O-acylglucosamine using 3-hydroxyacyl-ACP as the acyl donor. Is involved in the biosynthesis of lipid A, a phosphorylated glycolipid that anchors the lipopolysaccharide to the outer membrane of the cell. The polypeptide is UDP-3-O-acylglucosamine N-acyltransferase 1 (Nitrobacter winogradskyi (strain ATCC 25391 / DSM 10237 / CIP 104748 / NCIMB 11846 / Nb-255)).